Consider the following 289-residue polypeptide: Thioredoxin-like protein 1 (289 aa).

Residues 2 to 109 enclose the Thioredoxin domain; that stretch reads VGVKPVGSDP…EEKIKQHLEN (108 aa). A disulfide bridge connects residues cysteine 34 and cysteine 37. Serine 113 is modified (phosphoserine). The PITH domain maps to 115-285; the sequence is EDADIPKGYM…NDFKRVVGKK (171 aa).

As to quaternary structure, component of the 19S regulatory cap of the 26S proteasome. Interacts with PSMD14/RPN11. Interacts with, and reduces EEF1A1.

The protein resides in the cytoplasm. Its subcellular location is the nucleus. Active thioredoxin with a redox potential of about -250 mV. In Mus musculus (Mouse), this protein is Thioredoxin-like protein 1 (Txnl1).